The chain runs to 1820 residues: Sodium channel protein (1820 aa).

Residues 1–117 (MARKFSSARP…FNPIRRGAIR (117 aa)) lie on the Cytoplasmic side of the membrane. Residues 108–410 (FNPIRRGAIR…VAMAYEEQNQ (303 aa)) form an I repeat. The helical transmembrane segment at 118–138 (VFVNSAFNFFIMFTIFSNCIF) threads the bilayer. At 139-149 (MTISNPPAWSK) the chain is on the extracellular side. The chain crosses the membrane as a helical span at residues 150 to 171 (IVEYTFTGIYTFEVIVKVLSRG). Over 172–176 (FCIGH) the chain is Cytoplasmic. The helical transmembrane segment at 177–197 (FTFLRDPWNWLDFSVVTMTYI) threads the bilayer. Topologically, residues 198 to 203 (TEFIDL) are extracellular. A helical; Voltage-sensor membrane pass occupies residues 204–224 (RNVSALRTFRVLRALKTITIF). Residues 225–243 (PGLKTIVRALIESMKQMGD) lie on the Cytoplasmic side of the membrane. A helical membrane pass occupies residues 244–264 (VVILTVFSLAVFTLAGMQLFM). Over 265–346 (GNLRHKCIRW…PNYGYTNYDN (82 aa)) the chain is Extracellular. Cys271 and Cys324 are oxidised to a cystine. 3 N-linked (GlcNAc...) asparagine glycosylation sites follow: Asn278, Asn288, and Asn317. Residues 285-342 (SAYNTTFDFTAYIENEENQYFLDGALDALLCGNNSDAGKCPEGYTCMKAGRNPNYGYT) are non-homologous region of repeat I. Positions 347–371 (FAWTFLCLFRLMLQDYWENLYQMTL) form an intramembrane region, pore-forming. Over 372–378 (RAAGKSY) the chain is Extracellular. A helical membrane pass occupies residues 379–402 (MVFFIMVIFLGSFYLINLILAVVA). Residues 403-557 (MAYEEQNQAT…CCGPWVFLKK (155 aa)) are Cytoplasmic-facing. The tract at residues 483–507 (SVKLSTEEQRSDSKSMDSKHSVDKP) is disordered. Positions 487 to 507 (STEEQRSDSKSMDSKHSVDKP) are enriched in basic and acidic residues. The stretch at 548–811 (CCGPWVFLKK…EEDDEVNSLQ (264 aa)) is one II repeat. Residues 558 to 578 (WVHFVMMDPFTDLFITLCIIL) traverse the membrane as a helical segment. At 579–599 (NTLFMSIEHHPMNESFQSLLS) the chain is on the extracellular side. Asn591 carries an N-linked (GlcNAc...) asparagine glycan. The chain crosses the membrane as a helical span at residues 600–620 (AGNLVFTTIFAAEMVLKIIAL). The Cytoplasmic segment spans residues 621-625 (DPYYY). The chain crosses the membrane as a helical span at residues 626-643 (FQQTWNIFDSIIVSLSLL). The Extracellular segment spans residues 644–650 (ELGLSNM). The helical; Voltage-sensor transmembrane segment at 651 to 671 (QGMSVLRSLRLLRIFKLAKSW) threads the bilayer. Over 672 to 690 (PTLNILIKIICNSVGALGN) the chain is Cytoplasmic. Residues 691–711 (LTIVLAIIVFIFALVGFQLFG) traverse the membrane as a helical segment. Topologically, residues 712–734 (KNYKEYVCKISDDCELPRWHMND) are extracellular. Residues 735–755 (FFHSFLIVFRALCGEWIETMW) constitute an intramembrane region (pore-forming). Residues 756-766 (DCMEVGGVPMC) are Extracellular-facing. An intrachain disulfide couples Cys757 to Cys766. The chain crosses the membrane as a helical span at residues 767 to 790 (LAVYMMVIIIGNLVMLNLFLALLL). At 791–1004 (SSFSSDNLSS…TIVEHDYFET (214 aa)) the chain is on the cytoplasmic side. 2 disordered regions span residues 844–864 (PPSDDVVGEEGDNEGKKDTLP) and 891–959 (VKGE…SKDP). Residues 896–910 (EIEEEGLVDSSDEED) are compositionally biased toward acidic residues. The span at 924–935 (SVCSTVDYSPSE) shows a compositional bias: polar residues. The span at 942–953 (EEEEEEEEEPEE) shows a compositional bias: acidic residues. The stretch at 988–1295 (NLRRTCYTIV…KKYYNAMKKL (308 aa)) is one III repeat. A helical transmembrane segment spans residues 1005 to 1025 (FIIFMILLSSGVLAFEDIYIW). Residues 1026-1037 (RRRVIKVILEYA) lie on the Extracellular side of the membrane. Residues 1038 to 1058 (DKVFTYVFIVEMLLKWVAYGF) form a helical membrane-spanning segment. Topologically, residues 1059 to 1065 (KRYFTDA) are cytoplasmic. The chain crosses the membrane as a helical span at residues 1066–1086 (WCWLDFVIVGASIMGITSSLL). At 1087–1091 (GYEEL) the chain is on the extracellular side. A helical; Voltage-sensor membrane pass occupies residues 1092 to 1112 (GAIKNLRTIRALRPLRALSRF). Residues 1113 to 1131 (EGMKVVVRALLGAIPSIMN) are Cytoplasmic-facing. The chain crosses the membrane as a helical span at residues 1132–1152 (VLLVCLMFWLIFSIMGVNLFA). The Extracellular segment spans residues 1153 to 1199 (GKFYRCINTTTDEILPVEEVNNRSDCMALMYTNEVRWVNLKVNYDNA). 2 N-linked (GlcNAc...) asparagine glycosylation sites follow: Asn1160 and Asn1174. The non-homologous region of repeat III stretch occupies residues 1172–1194 (VNNRSDCMALMYTNEVRWVNLKV). The pore-forming intramembrane region spans 1200–1221 (GMGYLSLLQVSTFKGWMDIMYA). Residues 1222-1243 (AVDSREVEDQPIYEINVYMYLY) are Extracellular-facing. The chain crosses the membrane as a helical span at residues 1244 to 1264 (FVIFIVFGAFFTLNLFIGVII). The Cytoplasmic portion of the chain corresponds to 1265 to 1320 (DNFNRQKQKLGGEDLFMTEEQKKYYNAMKKLGSKKAAKCIPRPSNVVQGVVYDIVT). The stretch at 1304–1602 (IPRPSNVVQG…WHKFDVHGTQ (299 aa)) is one IV repeat. A helical transmembrane segment spans residues 1321–1341 (QPFTDIFIMALICINMVAMMV). The Extracellular segment spans residues 1342–1352 (ESEDQSQVKKD). The helical transmembrane segment at 1353–1376 (ILSQINVIFVIIFTVECLLKLLAL) threads the bilayer. The Cytoplasmic portion of the chain corresponds to 1377-1380 (RQYF). Residues 1381–1398 (FTVGWNVFDFAVVVISII) form a helical membrane-spanning segment. Residues 1399-1416 (GLLLSDIIEKYFVSPTLF) are Extracellular-facing. Residues 1417 to 1437 (RVIRLARIARVLRLIRAAKGI) traverse the membrane as a helical; Voltage-sensor segment. Residues 1438-1453 (RTLLFALMMSLPALFN) lie on the Cytoplasmic side of the membrane. A helical membrane pass occupies residues 1454-1474 (IGLLLFLIMFIFSIFGMSNFA). Residues 1475–1490 (YVKKQGGVDDIFNFET) are Extracellular-facing. The non-homologous region of repeat IV stretch occupies residues 1490–1505 (TFGNSMICLFEITTSA). The pore-forming intramembrane region spans 1491-1513 (FGNSMICLFEITTSAGWDGLLLP). Residues 1514–1543 (TLNTGPPDCDPDVENPGTDVRGNCGNPGKG) lie on the Extracellular side of the membrane. Residues 1544–1567 (ITFFCSYIILSFLVVVNMYIAIIL) form a helical membrane-spanning segment. Over 1568–1820 (ENFGVAQEES…GAIVVRESIV (253 aa)) the chain is Cytoplasmic.

This sequence belongs to the sodium channel (TC 1.A.1.10) family.

It localises to the cell membrane. Functionally, mediates the voltage-dependent sodium ion permeability of excitable membranes. Assuming opened or closed conformations in response to the voltage difference across the membrane, the protein forms a sodium-selective channel through which Na(+) ions may pass in accordance with their electrochemical gradient. This Electrophorus electricus (Electric eel) protein is Sodium channel protein.